The chain runs to 172 residues: Small acidic protein (172 aa).

Residues 1–160 form a disordered region; the sequence is MSSARESQAR…VPETKKEAKS (160 aa). A compositionally biased stretch (basic and acidic residues) spans 46–76; that stretch reads GKKEHTGRLVIGDHRSTSHFRTGEEDKKMNE. Positions 80-92 are enriched in polar residues; it reads SQYQQSMDSTMSG. Basic and acidic residues-rich tracts occupy residues 112–122 and 144–160; these read AAGHSSDHESS and ETHD…EAKS.

This sequence belongs to the SMAP family. As to expression, expressed in brain, heart, eye, liver, kidney and skeletal muscle.

This chain is Small acidic protein (SMAP), found in Gallus gallus (Chicken).